Reading from the N-terminus, the 62-residue chain is Large ribosomal subunit protein uL30 (62 aa).

This sequence belongs to the universal ribosomal protein uL30 family. In terms of assembly, part of the 50S ribosomal subunit.

The protein is Large ribosomal subunit protein uL30 of Kosmotoga olearia (strain ATCC BAA-1733 / DSM 21960 / TBF 19.5.1).